Consider the following 336-residue polypeptide: Probable G-protein coupled receptor 82 (336 aa).

Over 1 to 11 (MNNNTTCIQPS) the chain is Extracellular. N-linked (GlcNAc...) asparagine glycans are attached at residues Asn3 and Asn4. The helical transmembrane segment at 12-32 (MISSMALPIIYILLCIVGVFG) threads the bilayer. At 33-55 (NTLSQWIFLTKIGKKTSTHIYLS) the chain is on the cytoplasmic side. A helical transmembrane segment spans residues 56–76 (HLVTANLLVCSAMPFMSIYFL). Over 77 to 92 (KGFQWEYQSAQCRVVN) the chain is Extracellular. A helical transmembrane segment spans residues 93–115 (FLGTLSMHASMFVSLLILSWIAI). Residues 116-156 (SRYATLMQKDSSQETTSCYEKIFYGHLLKKFRQPNFARKLC) lie on the Cytoplasmic side of the membrane. Residues 157–177 (IYIWGVVLGIIIPVTVYYSVI) form a helical membrane-spanning segment. The Extracellular segment spans residues 178–197 (EATEGEESLCYNRQMELGAM). Residues 198-218 (ISQIAGLIGTTFIGFSFLVVL) form a helical membrane-spanning segment. Over 219-251 (TSYYSFVSHLRKIRTCTSIMEKDLTYSSVKRHL) the chain is Cytoplasmic. A helical membrane pass occupies residues 252–272 (LVIQILLIVCFLPYSIFKPIF). The Extracellular portion of the chain corresponds to 273-336 (YVLHQRDNCQ…SNSAHMQSYG (64 aa)).

This sequence belongs to the G-protein coupled receptor 1 family.

Its subcellular location is the cell membrane. Orphan receptor. This Homo sapiens (Human) protein is Probable G-protein coupled receptor 82 (GPR82).